Reading from the N-terminus, the 297-residue chain is GTP-binding protein REM 1 (297 aa).

Residues 1–10 (MTLNTQQEAK) show a composition bias toward polar residues. A disordered region spans residues 1 to 73 (MTLNTQQEAK…DGWSSESSDS (73 aa)). Position 51 is a phosphoserine (S51). Over residues 64–73 (DGWSSESSDS) the composition is skewed to low complexity. Residues 87-94 (GDPGVGKT) and 194-197 (NKAD) contribute to the GTP site. Residues 267 to 286 (ARRFLARLTARSARRRALKA) form a calmodulin-binding region.

Belongs to the small GTPase superfamily. RGK family. As to quaternary structure, in vitro, interacts with calmodulin in a calcium-dependent manner. Interacts 14-3-3 family members including YWHAE, YWHAH, YWHAQ, YWHAZ in a phosphorylation-dependent manner. In terms of tissue distribution, high expression in cardiac muscle. Moderate expression in lung, skeletal muscle and kidney. Low levels in spleen and brain.

Functionally, promotes endothelial cell sprouting and actin cytoskeletal reorganization. May be involved in angiogenesis. May function in Ca(2+) signaling. The protein is GTP-binding protein REM 1 (Rem1) of Mus musculus (Mouse).